Reading from the N-terminus, the 274-residue chain is Large ribosomal subunit protein uL2cz/uL2cy (274 aa).

Disordered regions lie at residues Met1–Gln21 and Pro225–Lys274.

Belongs to the universal ribosomal protein uL2 family. In terms of assembly, part of the 50S ribosomal subunit.

It localises to the plastid. The protein localises to the chloroplast. The chain is Large ribosomal subunit protein uL2cz/uL2cy (rpl2-A) from Gossypium barbadense (Sea Island cotton).